The sequence spans 416 residues: Protein LAZY 1 (416 aa).

Residues 63–83 form a helical membrane-spanning segment; the sequence is FTFGGSGLLTIGTLGIAAVAI. The IGT motif signature appears at 69–75; sequence GLLTIGT. Disordered regions lie at residues 266 to 306 and 337 to 361; these read AAAA…GMPA and KKSRNRGATDNGGGAVATGDPDGPL. Gly residues predominate over residues 270–282; it reads GVGGDRAGKGGGY. The Nuclear localization signal signature appears at 278–295; the sequence is KGGGYKTMKKRKVKDEKG.

The protein belongs to the LAZY family. Expressed specifically in the cells at the inner side of the vascular bundles of young leaf sheaths and peripheral cylinders of vascular bundles in the unelongated stems. Expressed in the leaf sheath pulvinus and the lamina joint.

It is found in the cell membrane. The protein localises to the nucleus. Functionally, involved in the regulation of shoot gravitropism and tiller angle through negative regulation of basipetal polar auxin transport (PAT). Acts as positive regulator of lateral auxin transport. Promotes vertical shoot growth. LAZY1 and TAC1 play opposite functions in the regulation of tiller growth angle. The sequence is that of Protein LAZY 1 from Oryza sativa subsp. japonica (Rice).